Reading from the N-terminus, the 101-residue chain is MAKLALIEREKKRARLAQKYAPKRAELKAIIDDASKSDEERYAARLELQQLPRNANPTRKRNRCAITGRPRGTFRKFGLARNKIREIAFRGEIPGLTKASW.

The protein belongs to the universal ribosomal protein uS14 family. Part of the 30S ribosomal subunit. Contacts proteins S3 and S10.

Its function is as follows. Binds 16S rRNA, required for the assembly of 30S particles and may also be responsible for determining the conformation of the 16S rRNA at the A site. The protein is Small ribosomal subunit protein uS14 of Burkholderia mallei (strain NCTC 10247).